The sequence spans 304 residues: D-alanine--D-alanine ligase (304 aa).

The ATP-grasp domain maps to 107–300; it reads KRLWQGSGLP…FDELVARILG (194 aa). An ATP-binding site is contributed by 134–186; sequence VGYPVIVKPAREGSSLGMSRVEGPEELAEAYRVAAAYDDTVLAEAWVEGEEYT. Mg(2+) is bound by residues D254, E267, and N269.

This sequence belongs to the D-alanine--D-alanine ligase family. Mg(2+) is required as a cofactor. Requires Mn(2+) as cofactor.

It localises to the cytoplasm. It carries out the reaction 2 D-alanine + ATP = D-alanyl-D-alanine + ADP + phosphate + H(+). It participates in cell wall biogenesis; peptidoglycan biosynthesis. In terms of biological role, cell wall formation. This chain is D-alanine--D-alanine ligase, found in Halorhodospira halophila (strain DSM 244 / SL1) (Ectothiorhodospira halophila (strain DSM 244 / SL1)).